The chain runs to 643 residues: Phosphatidylinositol-3,5-bisphosphate 3-phosphatase MTMR2 (643 aa).

Composition is skewed to polar residues over residues 1-12 and 23-40; these read MEKSSSCESLGS and DSLS…VHTK. The interval 1–56 is disordered; it reads MEKSSSCESLGSQPAAARPPSVDSLSSASTSHSENSVHTKSASVVSSDSISTSADN. A phosphoserine mark is found at Ser-6 and Ser-9. Positions 41 to 55 are enriched in low complexity; the sequence is SASVVSSDSISTSAD. Position 58 is a phosphoserine (Ser-58). The GRAM domain occupies 68–139; that stretch reads NKLAEMEEPP…GVINRVEKIG (72 aa). Residues 205–580 form the Myotubularin phosphatase domain; it reads GWKLYDPLLE…RHLELWVGYY (376 aa). 3 residues coordinate a 1,2-diacyl-sn-glycero-3-phospho-(1D-myo-inositol-3,5-bisphosphate): Asn-330, Asn-355, and Ile-356. A 1,2-diacyl-sn-glycero-3-phospho-(1D-myo-inositol-3-phosphate) contacts are provided by Asn-330, Asn-355, and Ile-356. Cys-417 functions as the Phosphocysteine intermediate in the catalytic mechanism. Positions 418, 419, 420, 421, 422, 423, 459, and 463 each coordinate a 1,2-diacyl-sn-glycero-3-phospho-(1D-myo-inositol-3,5-bisphosphate). The a 1,2-diacyl-sn-glycero-3-phospho-(1D-myo-inositol-3-phosphate) site is built by Ser-418, Asp-419, Gly-420, Trp-421, Asp-422, and Arg-423. Arg-463 lines the a 1,2-diacyl-sn-glycero-3-phospho-(1D-myo-inositol-3-phosphate) pocket. A coiled-coil region spans residues 593 to 627; that stretch reads IHNRYKELLAKRAELQKKVEELQREISNRSTSSSE. A disordered region spans residues 615–643; that stretch reads QREISNRSTSSSERASSPAQCVTPVQTVV. The segment covering 620–631 has biased composition (low complexity); that stretch reads NRSTSSSERASS. Over residues 632–643 the composition is skewed to polar residues; the sequence is PAQCVTPVQTVV.

This sequence belongs to the protein-tyrosine phosphatase family. Non-receptor class myotubularin subfamily. In terms of assembly, homodimer (via coiled-coil domain). Heterotetramer consisting of one MTMR2 dimer and one SBF2/MTMR13 dimer; specifically in peripheral nerves stabilizes SBF2/MTMR13 at the membranes and increases MTMR2 catalytic activity towards phosphatidylinositol 3,5-bisphosphate and to a lesser extent towards phosphatidylinositol 3-phosphate. Heterodimer with SBF1/MTMR5; acts as an adapter for the phosphatase MTMR2 to regulate MTMR2 catalytic activity and subcellular location. Heterodimer with MTMR12. In terms of processing, phosphorylation at Ser-58 decreases MTMR2 localization to endocytic vesicular structures.

It localises to the cytoplasm. The protein resides in the early endosome membrane. The protein localises to the perinuclear region. It is found in the cell projection. Its subcellular location is the axon. It localises to the endosome membrane. It carries out the reaction a 1,2-diacyl-sn-glycero-3-phospho-(1D-myo-inositol-3,5-bisphosphate) + H2O = a 1,2-diacyl-sn-glycero-3-phospho-(1D-myo-inositol-5-phosphate) + phosphate. The enzyme catalyses a 1,2-diacyl-sn-glycero-3-phospho-(1D-myo-inositol-3-phosphate) + H2O = a 1,2-diacyl-sn-glycero-3-phospho-(1D-myo-inositol) + phosphate. The catalysed reaction is 1,2-dioctanoyl-sn-glycero-3-phospho-(1-D-myo-inositol-3-phosphate) + H2O = 1,2-dioctanoyl-sn-glycero-3-phospho-(1D-myo-inositol) + phosphate. It catalyses the reaction 1,2-dioctanoyl-sn-glycero-3-phospho-(1D-myo-inositol-3,5-bisphosphate) + H2O = 1,2-dioctanoyl-sn-glycero-3-phospho-(1D-myo-inositol-5-phosphate) + phosphate. Functionally, lipid phosphatase that specifically dephosphorylates the D-3 position of phosphatidylinositol 3-phosphate and phosphatidylinositol 3,5-bisphosphate, generating phosphatidylinositol and phosphatidylinositol 5-phosphate. Regulates the level of these phosphoinositides critical for various biological processes including autophagy initiation and autophagosome maturation. The polypeptide is Phosphatidylinositol-3,5-bisphosphate 3-phosphatase MTMR2 (Pongo abelii (Sumatran orangutan)).